The chain runs to 245 residues: NAD-dependent protein deacetylase (245 aa).

One can recognise a Deacetylase sirtuin-type domain in the interval 1–245 (MIFVQQFEEV…EFVEGLSSIK (245 aa)). NAD(+)-binding residues include Ala-26, Thr-30, Phe-37, Arg-38, Gln-105, Ile-107, Asp-108, and His-123. Position 37 (Phe-37) interacts with nicotinamide. 2 residues coordinate nicotinamide: Ile-107 and Asp-108. His-123 acts as the Proton acceptor in catalysis. Cys-131, Cys-134, Cys-151, and Cys-154 together coordinate Zn(2+). Residues Thr-190, Ser-191, Asn-216, and Ile-234 each coordinate NAD(+).

Belongs to the sirtuin family. Class U subfamily. Zn(2+) is required as a cofactor.

It is found in the cytoplasm. It catalyses the reaction N(6)-acetyl-L-lysyl-[protein] + NAD(+) + H2O = 2''-O-acetyl-ADP-D-ribose + nicotinamide + L-lysyl-[protein]. In terms of biological role, NAD-dependent protein deacetylase which modulates the activities of several enzymes which are inactive in their acetylated form. This chain is NAD-dependent protein deacetylase, found in Bacillus thuringiensis subsp. konkukian (strain 97-27).